The sequence spans 234 residues: ATP-dependent dethiobiotin synthetase BioD (234 aa).

12–17 contacts ATP; sequence GAGKTI. Threonine 16 contributes to the Mg(2+) binding site. Residue lysine 39 is part of the active site. A substrate-binding site is contributed by threonine 43. Residues aspartate 47, 108-111, 168-169, and 200-202 each bind ATP; these read EGLG, SC, and PYL. Mg(2+) contacts are provided by aspartate 47 and glutamate 108.

Belongs to the dethiobiotin synthetase family. Homodimer. It depends on Mg(2+) as a cofactor.

The protein resides in the cytoplasm. The enzyme catalyses (7R,8S)-7,8-diammoniononanoate + CO2 + ATP = (4R,5S)-dethiobiotin + ADP + phosphate + 3 H(+). The catalysed reaction is (7R,8S)-8-amino-7-(carboxyamino)nonanoate + ATP = (4R,5S)-dethiobiotin + ADP + phosphate + H(+). It participates in cofactor biosynthesis; biotin biosynthesis; biotin from 7,8-diaminononanoate: step 1/2. Functionally, catalyzes a mechanistically unusual reaction, the ATP-dependent insertion of CO2 between the N7 and N8 nitrogen atoms of 7,8-diaminopelargonic acid (DAPA, also called 7,8-diammoniononanoate) to form a ureido ring. This cyanobacterium does not encode bioA (which catalyzes the formation of the precursor for this reaction in the cannonical pathway), instead it encodes bioU, which replaces bioA and also performs the first half of the cannonical BioD reaction. Thus in this organism BioD has a different substrate. The chain is ATP-dependent dethiobiotin synthetase BioD from Rippkaea orientalis (strain PCC 8801 / RF-1) (Cyanothece sp. (strain PCC 8801)).